Reading from the N-terminus, the 813-residue chain is Protein tramtrack, alpha isoform (813 aa).

The BTB domain occupies 33-98 (TDVTLAVEGQ…MYRGEVSVDQ (66 aa)). Disordered stretches follow at residues 118 to 148 (EVND…PQLQ), 171 to 324 (ANAG…GPSE), 356 to 428 (TTPA…MPKK), and 526 to 585 (AGLP…LDDQ). Residues 125 to 145 (SPAAAAAGAGATGSESTATTP) show a composition bias toward low complexity. Positions 176-187 (TPTLPVQPSLLS) are enriched in polar residues. Residues 192 to 201 (PKRKRGRPRK) are compositionally biased toward basic residues. Residues serine 203, serine 205, and serine 206 each carry the phosphoserine modification. At threonine 209 the chain carries Phosphothreonine. A compositionally biased stretch (basic and acidic residues) spans 254 to 285 (HTDDLNESRDSLPSKRSKNSKDHRVVSHHEDN). Polar residues-rich tracts occupy residues 302–324 (LFGS…GPSE), 356–369 (TTPA…TPTK), and 377–388 (ATGSNNSNSLLK). A compositionally biased stretch (basic residues) spans 560–578 (SGKKGAKRPIQRRRVRRKA). 2 C2H2-type zinc fingers span residues 610-638 (YRCT…FLYH) and 646-669 (FPCP…KMTH). Position 682 is a phosphoserine (serine 682).

Interacts with CoRest/CG33525, suggesting that it acts by recruiting a CoRest-containing corepressor complex. Interacts with phyl.

The protein localises to the nucleus. Its function is as follows. Binds to a number of sites in the transcriptional regulatory region of ftz. Isoform alpha is required to repress genes that promote the R7 cell fate. Probable repressor of the transcription of the segmentation genes ftz, eve, h, odd, run, and en. May bind to the region 5'-AGGG[CT]GG-3'. Degradation of ttk is directed by binding of sinah or sina, via the adapter molecule phyl which binds to the BTB domain of ttk. This chain is Protein tramtrack, alpha isoform (ttk), found in Drosophila melanogaster (Fruit fly).